Consider the following 290-residue polypeptide: MDHSLTQDRWQAWCRLMRIDKPIGSLLLLWPTLWALWLAGMAIPALGTLTVFILGVFFMRAAGCVINDYADRKIDGHVKRTRARPLPSGAIGEKEAKLLFGALVGISFALVLTLNSMTIALSTVALALAWVYPFMKRYTHLPQLVLGAAFGWSIPMVFTAVSESLPLSCWLLFLANITWTVAYDTQYAMVDRDDDLRIGVKSTAILFGRFDKLIIGLLQLATLLLLGVIGWQLGLGRIYYLALAGAAGLFLWQQKLIVDREREACFRAFLNNNLVGMLIFVGILLSLLSY.

6 helical membrane-spanning segments follow: residues 38–58 (LAGM…GVFF), 99–119 (LFGA…SMTI), 141–161 (LPQL…FTAV), 213–233 (LIIG…GWQL), 238–258 (IYYL…KLIV), and 268–288 (AFLN…LSLL).

This sequence belongs to the UbiA prenyltransferase family. Mg(2+) serves as cofactor.

The protein resides in the cell inner membrane. The catalysed reaction is all-trans-octaprenyl diphosphate + 4-hydroxybenzoate = 4-hydroxy-3-(all-trans-octaprenyl)benzoate + diphosphate. It functions in the pathway cofactor biosynthesis; ubiquinone biosynthesis. Catalyzes the prenylation of para-hydroxybenzoate (PHB) with an all-trans polyprenyl group. Mediates the second step in the final reaction sequence of ubiquinone-8 (UQ-8) biosynthesis, which is the condensation of the polyisoprenoid side chain with PHB, generating the first membrane-bound Q intermediate 3-octaprenyl-4-hydroxybenzoate. In Sodalis glossinidius (strain morsitans), this protein is 4-hydroxybenzoate octaprenyltransferase.